A 466-amino-acid chain; its full sequence is Asparagine--tRNA ligase (466 aa).

Belongs to the class-II aminoacyl-tRNA synthetase family. Homodimer.

The protein localises to the cytoplasm. The enzyme catalyses tRNA(Asn) + L-asparagine + ATP = L-asparaginyl-tRNA(Asn) + AMP + diphosphate + H(+). This is Asparagine--tRNA ligase from Yersinia pseudotuberculosis serotype O:1b (strain IP 31758).